Consider the following 627-residue polypeptide: MRTSAQILPLVKDPERLEARLSEIPPEPGVYFMRDGSDRIIYIGKSRKLRSRVRSYFREGYNKTERIATMAKLVTEIEFIVTDTEAEALALEANLIKQHQPYFNVLLKDDKKYPYVCITWSEDYPRIFITRKRQLGKEKDKYYGPYTDSGLLREILRISKRIFALRQRPQPLFKDRPCLNYDLGRCPGVCQQLISPEEYRKTVQKVAMVFQGRTQELIDILSEQMEKAAEALNFEVAARIRDQIAGLKSLTAEQKVSLPDDTVSRDAIALAADAQHACIQLFQIRAGQLVGRLAFVAESHAEPGAILQRVLEEHYQTAESVEIPAEILVQHELPDAEILADVLTQRKGRKVTIFTPQRQVKAELIEMVERNAQYELQRMQKLGDRNHQATQDLAAILDLPDLPHRIEGYDISHIQGSNAVASQVVFIDGLPAKQNYRHYKIKNPTVTIGHSDDFASLAEVIQRRFRKYAEDPQLSRVGNPDWPDLIMIDGGKGQLSSVVAVLQEMNLLEDLRVISLAKRREEIFLPGESQPLKTDAEQPGVQLLRRLRDEAHRFAVSFHRQQRSDKLKRSRLDEIPGLGHHRQKQLLAHFRSVDYIRQATPAQIAEVPGIGPHLAQAIYDYFHPSHV.

Positions 26–105 constitute a GIY-YIG domain; it reads PEPGVYFMRD…IKQHQPYFNV (80 aa). The UVR domain occupies 215 to 250; that stretch reads QELIDILSEQMEKAAEALNFEVAARIRDQIAGLKSL.

The protein belongs to the UvrC family. Interacts with UvrB in an incision complex.

The protein localises to the cytoplasm. The UvrABC repair system catalyzes the recognition and processing of DNA lesions. UvrC both incises the 5' and 3' sides of the lesion. The N-terminal half is responsible for the 3' incision and the C-terminal half is responsible for the 5' incision. This chain is UvrABC system protein C, found in Trichormus variabilis (strain ATCC 29413 / PCC 7937) (Anabaena variabilis).